A 59-amino-acid polypeptide reads, in one-letter code: uncharacterized protein (59 aa).

This is an uncharacterized protein from Treponema pallidum (strain Nichols).